The sequence spans 203 residues: Peptide deformylase (203 aa).

Fe cation-binding residues include Cys-130 and His-173. The active site involves Glu-174. His-177 contacts Fe cation.

Belongs to the polypeptide deformylase family. Requires Fe(2+) as cofactor.

It catalyses the reaction N-terminal N-formyl-L-methionyl-[peptide] + H2O = N-terminal L-methionyl-[peptide] + formate. Its function is as follows. Removes the formyl group from the N-terminal Met of newly synthesized proteins. Requires at least a dipeptide for an efficient rate of reaction. N-terminal L-methionine is a prerequisite for activity but the enzyme has broad specificity at other positions. This is Peptide deformylase from Streptococcus pneumoniae serotype 19F (strain G54).